The sequence spans 637 residues: DNA gyrase subunit B (637 aa).

The region spanning 422–536 (CEVYIVEGDS…AGYVYLAMPP (115 aa)) is the Toprim domain. Residues glutamate 428, aspartate 501, and aspartate 503 each contribute to the Mg(2+) site.

The protein belongs to the type II topoisomerase GyrB family. In terms of assembly, heterotetramer, composed of two GyrA and two GyrB chains. In the heterotetramer, GyrA contains the active site tyrosine that forms a transient covalent intermediate with DNA, while GyrB binds cofactors and catalyzes ATP hydrolysis. Requires Mg(2+) as cofactor. Mn(2+) is required as a cofactor. The cofactor is Ca(2+).

It localises to the cytoplasm. It carries out the reaction ATP-dependent breakage, passage and rejoining of double-stranded DNA.. Functionally, a type II topoisomerase that negatively supercoils closed circular double-stranded (ds) DNA in an ATP-dependent manner to modulate DNA topology and maintain chromosomes in an underwound state. Negative supercoiling favors strand separation, and DNA replication, transcription, recombination and repair, all of which involve strand separation. Also able to catalyze the interconversion of other topological isomers of dsDNA rings, including catenanes and knotted rings. Type II topoisomerases break and join 2 DNA strands simultaneously in an ATP-dependent manner. The protein is DNA gyrase subunit B of Treponema pallidum (strain Nichols).